Consider the following 352-residue polypeptide: Peptide chain release factor 1 (352 aa).

At Gln230 the chain carries N5-methylglutamine.

This sequence belongs to the prokaryotic/mitochondrial release factor family. In terms of processing, methylated by PrmC. Methylation increases the termination efficiency of RF1.

It localises to the cytoplasm. Its function is as follows. Peptide chain release factor 1 directs the termination of translation in response to the peptide chain termination codons UAG and UAA. The polypeptide is Peptide chain release factor 1 (Exiguobacterium sibiricum (strain DSM 17290 / CCUG 55495 / CIP 109462 / JCM 13490 / 255-15)).